The sequence spans 942 residues: NBPF family member NBPF8 (942 aa).

Residues 89 to 130 adopt a coiled-coil conformation; that stretch reads AEELRQYKVLVHSQERELTQLKEKLQEGRDASRSLNEHLQAL. The interval 161-203 is disordered; the sequence is KLSPENDEDEDEDVQVEEDEKVQKSSAPREVQKAEESKVPEDS. A compositionally biased stretch (acidic residues) spans 165 to 180; the sequence is ENDEDEDEDVQVEEDE. The Olduvai 1 domain occupies 165 to 259; the sequence is ENDEDEDEDV…ECQDALNILS (95 aa). Over residues 190–201 the composition is skewed to basic and acidic residues; sequence EVQKAEESKVPE. Residues 339–401 adopt a coiled-coil conformation; it reads KSMLRNERQF…LSLNEHLQAL (63 aa). Olduvai domains follow at residues 436–528, 529–617, 620–675, 676–767, 770–843, and 844–904; these read ENDN…HIIP, ENES…ATGP, SREL…VDMD, EIEK…PPCP, SREL…RSKK, and KRRR…RSVF. Disordered stretches follow at residues 451 to 474 and 528 to 566; these read EKVQKSSAPREMQKAEEKEVPEDS and PENESDDEEEEEKGPVSPRNLQESEEEEVPQESWDEGYS. Composition is skewed to acidic residues over residues 530-539 and 550-562; these read NESDDEEEEE and ESEEEEVPQESWD. Residues 831 to 849 show a composition bias toward basic residues; it reads GKGKIRRGRRSKKKRRRGR. The segment at 831-863 is disordered; sequence GKGKIRRGRRSKKKRRRGRKEGEEDQNPPCPRL.

The protein belongs to the NBPF family. Expressed in the mammary gland.

The protein resides in the cytoplasm. The sequence is that of NBPF family member NBPF8 from Homo sapiens (Human).